We begin with the raw amino-acid sequence, 272 residues long: Putative phosphoenolpyruvate synthase regulatory protein (272 aa).

152-159 contacts ADP; it reads GVSRCGKT.

Belongs to the pyruvate, phosphate/water dikinase regulatory protein family. PSRP subfamily.

It catalyses the reaction [pyruvate, water dikinase] + ADP = [pyruvate, water dikinase]-phosphate + AMP + H(+). The enzyme catalyses [pyruvate, water dikinase]-phosphate + phosphate + H(+) = [pyruvate, water dikinase] + diphosphate. Its function is as follows. Bifunctional serine/threonine kinase and phosphorylase involved in the regulation of the phosphoenolpyruvate synthase (PEPS) by catalyzing its phosphorylation/dephosphorylation. This chain is Putative phosphoenolpyruvate synthase regulatory protein, found in Pseudomonas putida (strain ATCC 47054 / DSM 6125 / CFBP 8728 / NCIMB 11950 / KT2440).